Here is a 330-residue protein sequence, read N- to C-terminus: Protein pelota homolog (330 aa).

The protein belongs to the eukaryotic release factor 1 family. Pelota subfamily. Monomer. The cofactor is a divalent metal cation.

The protein resides in the cytoplasm. Functionally, may function in recognizing stalled ribosomes, interact with stem-loop structures in stalled mRNA molecules, and effect endonucleolytic cleavage of the mRNA. May play a role in the release non-functional ribosomes and degradation of damaged mRNAs. Has endoribonuclease activity. The protein is Protein pelota homolog of Pyrobaculum neutrophilum (strain DSM 2338 / JCM 9278 / NBRC 100436 / V24Sta) (Thermoproteus neutrophilus).